Reading from the N-terminus, the 279-residue chain is MASSTSLAIVLHQSSNHDELFMKQTLQFSETLKDLKNLRKQLYSAAEYFETSYGKAEHKETVIETLKEYAAKAVVNTVDHLGSVSDKFNSFLSDNSTHFSTTHLRLSSLEQRMRLCRDYMGKSGTHQHLLLFQYPRHHKRYFFPQQGRGTSFSAGDDSHRFTSAVRSTILENLPNTARKANKTGSFSFAPIVHNNINNRTPNKRSNSPMRFPLLRSGSLLKRSSSPSQPKKPPLALPEPQRAISVSRNTEIVEIKQSSSRKGKKILMFKALMSMSKSRN.

Disordered regions lie at residues 192–211 and 219–241; these read VHNN…PMRF and LLKR…EPQR. A compositionally biased stretch (polar residues) spans 194-208; sequence NNINNRTPNKRSNSP. Residues 219–228 are compositionally biased toward low complexity; the sequence is LLKRSSSPSQ.

It belongs to the ABI family. Binds SCAR.

Its subcellular location is the cytoplasm. It is found in the cytoskeleton. Involved in regulation of actin and microtubule organization. Part of a WAVE complex that activates the Arp2/3 complex. The sequence is that of Protein ABIL4 (ABIL4) from Arabidopsis thaliana (Mouse-ear cress).